Here is an 858-residue protein sequence, read N- to C-terminus: Taste receptor type 1 member 3 (858 aa).

An N-terminal signal peptide occupies residues 1-20 (MPALAIMGLSLAAFLELGMG). Topologically, residues 21–572 (ASLCLSQQFK…RPKFLAWGEP (552 aa)) are extracellular. The N-linked (GlcNAc...) asparagine; when associated with variant T-60 glycan is linked to Asn-58. 9 N-linked (GlcNAc...) asparagine glycosylation sites follow: Asn-85, Asn-130, Asn-203, Asn-264, Asn-379, Asn-387, Asn-418, Asn-439, and Asn-482. A helical membrane pass occupies residues 573 to 593 (VVLSLLLLLCLVLGLALAALG). At 594–610 (LSVHHWDSPLVQASGGS) the chain is on the cytoplasmic side. Residues 611–631 (QFCFGLICLGLFCLSVLLFPG) traverse the membrane as a helical segment. At 632 to 644 (RPSSASCLAQQPM) the chain is on the extracellular side. Residues 645–665 (AHLPLTGCLSTLFLQAAETFV) form a helical membrane-spanning segment. Topologically, residues 666–687 (ESELPLSWANWLCSYLRGLWAW) are cytoplasmic. Residues 688 to 708 (LVVLLATFVEAALCAWYLIAF) traverse the membrane as a helical segment. At 709–735 (PPEVVTDWSVLPTEVLEHCHVRSWVSL) the chain is on the extracellular side. The chain crosses the membrane as a helical span at residues 736–756 (GLVHITNAMLAFLCFLGTFLV). At 757-767 (QSQPGRYNRAR) the chain is on the cytoplasmic side. Residues 768–788 (GLTFAMLAYFITWVSFVPLLA) form a helical membrane-spanning segment. The Extracellular portion of the chain corresponds to 789–796 (NVQVAYQP). A helical transmembrane segment spans residues 797 to 817 (AVQMGAILVCALGILVTFHLP). The Cytoplasmic portion of the chain corresponds to 818–858 (KCYVLLWLPKLNTQEFFLGRNAKKAADENSGGGEAAQGHNE).

This sequence belongs to the G-protein coupled receptor 3 family. TAS1R subfamily. In terms of assembly, forms homodimers or heterodimers with TAS1R1 and TAS1R2. Post-translationally, the Thr-60 variant is predicted to introduce a novel N-linked glycosylation site at Asn-58. The addition of even a short carbohydrate group at Asn-58 is predicted to disrupt one of the contact surfaces required for stability of a dimer. Therefore a Thr-60 variant N-glycosylated at Asn-58 is predicted to be precluded from forming homodimers or heterodimers. In terms of tissue distribution, expressed in circumvallate, foliate and fungiform taste papillae as well as in taste buds on the palate. Also expressed in testis. Not expressed in brain, heart, kidney, liver or spleen. The topographic distribution in various taste papillae is different from those of other T1R members.

Its subcellular location is the cell membrane. In terms of biological role, putative taste receptor. TAS1R1/TAS1R3 responds to the umami taste stimulus (the taste of monosodium glutamate) and also to most of the 20 standard L-amino acids, but not to their D-enantiomers or other compounds. TAS1R2/TAS1R3 recognizes diverse natural and synthetic sweeteners. TAS1R3 is essential for the recognition and response to the disaccharide trehalose. Sequence differences within and between species can significantly influence the selectivity and specificity of taste responses. The polypeptide is Taste receptor type 1 member 3 (Tas1r3) (Mus musculus (Mouse)).